Consider the following 419-residue polypeptide: Gamma-glutamyl phosphate reductase (419 aa).

It belongs to the gamma-glutamyl phosphate reductase family.

Its subcellular location is the cytoplasm. It catalyses the reaction L-glutamate 5-semialdehyde + phosphate + NADP(+) = L-glutamyl 5-phosphate + NADPH + H(+). It functions in the pathway amino-acid biosynthesis; L-proline biosynthesis; L-glutamate 5-semialdehyde from L-glutamate: step 2/2. Its function is as follows. Catalyzes the NADPH-dependent reduction of L-glutamate 5-phosphate into L-glutamate 5-semialdehyde and phosphate. The product spontaneously undergoes cyclization to form 1-pyrroline-5-carboxylate. The protein is Gamma-glutamyl phosphate reductase of Bordetella bronchiseptica (strain ATCC BAA-588 / NCTC 13252 / RB50) (Alcaligenes bronchisepticus).